Here is a 173-residue protein sequence, read N- to C-terminus: ATP synthase subunit d, mitochondrial (173 aa).

The transit peptide at 1 to 23 (MAARSAALKIDWVKVTSSLGLRG) directs the protein to the mitochondrion.

The protein belongs to the ATPase d subunit family. In terms of assembly, F-type ATPases have 2 components, CF(1) - the catalytic core - and CF(0) - the membrane proton channel. In yeast, the dimeric form of ATP synthase consists of 17 polypeptides: alpha, beta, gamma, delta, epsilon, 4 (B), 5 (OSCP), 6 (A), 8, 9 (C), d, E (Tim11), f, g, h, i/j and k.

The protein resides in the mitochondrion inner membrane. Mitochondrial membrane ATP synthase (F(1)F(0) ATP synthase or Complex V) produces ATP from ADP in the presence of a proton gradient across the membrane which is generated by electron transport complexes of the respiratory chain. F-type ATPases consist of two structural domains, F(1) - containing the extramembraneous catalytic core, and F(0) - containing the membrane proton channel, linked together by a central stalk and a peripheral stalk. During catalysis, ATP synthesis in the catalytic domain of F(1) is coupled via a rotary mechanism of the central stalk subunits to proton translocation. Part of the complex F(0) domain and the peripheric stalk, which acts as a stator to hold the catalytic alpha(3)beta(3) subcomplex and subunit a/ATP6 static relative to the rotary elements. The protein is ATP synthase subunit d, mitochondrial (atp7) of Aspergillus terreus (strain NIH 2624 / FGSC A1156).